Reading from the N-terminus, the 393-residue chain is Probable acetyl-CoA acetyltransferase (393 aa).

Position 2 (T2) is a propeptide, removed; alternate. Catalysis depends on C88, which acts as the Acyl-thioester intermediate. Catalysis depends on proton acceptor residues H349 and C379.

Belongs to the thiolase-like superfamily. Thiolase family.

The catalysed reaction is 2 acetyl-CoA = acetoacetyl-CoA + CoA. This Mycobacterium tuberculosis (strain ATCC 25618 / H37Rv) protein is Probable acetyl-CoA acetyltransferase (fadA4).